The sequence spans 478 residues: Transposase for insertion sequence element IS231D (478 aa).

It belongs to the transposase 11 family.

Its function is as follows. Involved in the transposition of the insertion sequence. The polypeptide is Transposase for insertion sequence element IS231D (Bacillus thuringiensis subsp. finitimus).